A 624-amino-acid chain; its full sequence is Chaperone protein DnaK (624 aa).

At threonine 174 the chain carries Phosphothreonine; by autocatalysis. 2 disordered regions span residues 544 to 563 (KKAQQENNLDDMKQKRDDLS) and 576 to 624 (NAQK…DDKK). The span at 581-600 (QQAQGGPASGAATDAGAAQG) shows a compositional bias: low complexity. A compositionally biased stretch (basic and acidic residues) spans 601–624 (SDDKKSDDDTINGDYKDVSDDDKK).

It belongs to the heat shock protein 70 family.

Functionally, acts as a chaperone. The polypeptide is Chaperone protein DnaK (Lacticaseibacillus casei (strain BL23) (Lactobacillus casei)).